A 184-amino-acid polypeptide reads, in one-letter code: Photosystem I assembly protein Ycf4 (184 aa).

2 helical membrane passes run 19–39 and 57–77; these read ISNF…LLVG and IIFF…LFIS.

The protein belongs to the Ycf4 family.

The protein resides in the plastid. It is found in the chloroplast thylakoid membrane. In terms of biological role, seems to be required for the assembly of the photosystem I complex. This chain is Photosystem I assembly protein Ycf4, found in Solanum bulbocastanum (Wild potato).